The chain runs to 283 residues: UPF0273 protein STK_18300 (283 aa).

The KaiC domain occupies 4 to 249; that stretch reads LRVRTYIPGF…YLRITNVKAE (246 aa). Position 31-38 (31-38) interacts with ATP; that stretch reads GGPGTGKS. Residues 261 to 283 form a disordered region; it reads MKKAVEESEEEKESIQEAEIEEE. The span at 267 to 283 shows a compositional bias: acidic residues; the sequence is ESEEEKESIQEAEIEEE.

It belongs to the UPF0273 family.

In Sulfurisphaera tokodaii (strain DSM 16993 / JCM 10545 / NBRC 100140 / 7) (Sulfolobus tokodaii), this protein is UPF0273 protein STK_18300.